The chain runs to 242 residues: Argininosuccinate synthase (242 aa).

Belongs to the argininosuccinate synthase family. Type 2 subfamily. In terms of assembly, homotetramer.

It is found in the cytoplasm. The catalysed reaction is L-citrulline + L-aspartate + ATP = 2-(N(omega)-L-arginino)succinate + AMP + diphosphate + H(+). It functions in the pathway amino-acid biosynthesis; L-arginine biosynthesis; L-arginine from L-ornithine and carbamoyl phosphate: step 2/3. In Dickeya chrysanthemi (Pectobacterium chrysanthemi), this protein is Argininosuccinate synthase (argG).